Consider the following 389-residue polypeptide: Sulfate adenylyltransferase (389 aa).

The protein belongs to the sulfate adenylyltransferase family.

It catalyses the reaction sulfate + ATP + H(+) = adenosine 5'-phosphosulfate + diphosphate. It functions in the pathway sulfur metabolism; hydrogen sulfide biosynthesis; sulfite from sulfate: step 1/3. In Deinococcus deserti (strain DSM 17065 / CIP 109153 / LMG 22923 / VCD115), this protein is Sulfate adenylyltransferase.